The chain runs to 110 residues: UPF0122 protein Sca_0859 (110 aa).

The protein belongs to the UPF0122 family.

In terms of biological role, might take part in the signal recognition particle (SRP) pathway. This is inferred from the conservation of its genetic proximity to ftsY/ffh. May be a regulatory protein. This is UPF0122 protein Sca_0859 from Staphylococcus carnosus (strain TM300).